We begin with the raw amino-acid sequence, 260 residues long: UPF0294 protein YE0917 (260 aa).

This sequence belongs to the UPF0294 family.

It localises to the cytoplasm. The protein is UPF0294 protein YE0917 of Yersinia enterocolitica serotype O:8 / biotype 1B (strain NCTC 13174 / 8081).